The primary structure comprises 101 residues: Putative pterin-4-alpha-carbinolamine dehydratase (101 aa).

It belongs to the pterin-4-alpha-carbinolamine dehydratase family.

The catalysed reaction is (4aS,6R)-4a-hydroxy-L-erythro-5,6,7,8-tetrahydrobiopterin = (6R)-L-erythro-6,7-dihydrobiopterin + H2O. This is Putative pterin-4-alpha-carbinolamine dehydratase from Rhizobium leguminosarum bv. trifolii (strain WSM2304).